Reading from the N-terminus, the 130-residue chain is UPF0251 protein MmarC7_1642 (130 aa).

The protein belongs to the UPF0251 family.

This is UPF0251 protein MmarC7_1642 from Methanococcus maripaludis (strain C7 / ATCC BAA-1331).